Consider the following 363-residue polypeptide: tRNA/tmRNA (uracil-C(5))-methyltransferase (363 aa).

Residues glutamine 187, tyrosine 215, asparagine 220, glutamate 236, and aspartate 296 each contribute to the S-adenosyl-L-methionine site. Cysteine 321 acts as the Nucleophile in catalysis. Residue glutamate 355 is the Proton acceptor of the active site.

The protein belongs to the class I-like SAM-binding methyltransferase superfamily. RNA M5U methyltransferase family. TrmA subfamily.

The catalysed reaction is uridine(54) in tRNA + S-adenosyl-L-methionine = 5-methyluridine(54) in tRNA + S-adenosyl-L-homocysteine + H(+). It carries out the reaction uridine(341) in tmRNA + S-adenosyl-L-methionine = 5-methyluridine(341) in tmRNA + S-adenosyl-L-homocysteine + H(+). Dual-specificity methyltransferase that catalyzes the formation of 5-methyluridine at position 54 (m5U54) in all tRNAs, and that of position 341 (m5U341) in tmRNA (transfer-mRNA). The sequence is that of tRNA/tmRNA (uracil-C(5))-methyltransferase from Pseudomonas fluorescens.